A 176-amino-acid polypeptide reads, in one-letter code: N,N-dimethyl phenylurea N-demethylase subunit beta (176 aa).

The protein belongs to the bacterial ring-hydroxylating dioxygenase beta subunit family. In terms of assembly, pdmA (subunit alpha) and PdmB (subunit beta) form the oxygenase component of a bacterial Rieske non-heme iron oxygenase (RO) system.

It carries out the reaction a 1,1-dimethyl-3-phenylurea + 2 reduced [2Fe-2S]-[ferredoxin] + O2 + 2 H(+) = a 1-methyl-3-phenylurea + formaldehyde + 2 oxidized [2Fe-2S]-[ferredoxin] + H2O. It catalyses the reaction isoproturon + 2 reduced [2Fe-2S]-[ferredoxin] + O2 + 2 H(+) = 1-methyl-3-[4-(propan-2-yl)phenyl]urea + formaldehyde + 2 oxidized [2Fe-2S]-[ferredoxin] + H2O. The enzyme catalyses chlorotoluron + 2 reduced [2Fe-2S]-[ferredoxin] + O2 + 2 H(+) = 3-(3-chloro-4-methylphenyl)-1-methylurea + formaldehyde + 2 oxidized [2Fe-2S]-[ferredoxin] + H2O. The catalysed reaction is metoxuron + 2 reduced [2Fe-2S]-[ferredoxin] + O2 + 2 H(+) = 3-(3-chloro-4-methoxylphenyl)-1-methylurea + formaldehyde + 2 oxidized [2Fe-2S]-[ferredoxin] + H2O. It carries out the reaction monuron + 2 reduced [2Fe-2S]-[ferredoxin] + O2 + 2 H(+) = 3-(4-chlorophenyl)-1-methylurea + formaldehyde + 2 oxidized [2Fe-2S]-[ferredoxin] + H2O. It catalyses the reaction diuron + 2 reduced [2Fe-2S]-[ferredoxin] + O2 + 2 H(+) = 3-(3,4-dichlorophenyl)-1-methylurea + formaldehyde + 2 oxidized [2Fe-2S]-[ferredoxin] + H2O. The enzyme catalyses fluometuron + 2 reduced [2Fe-2S]-[ferredoxin] + O2 + 2 H(+) = 3-[3-(trifluoromethyl)phenyl]-1-methylurea + formaldehyde + 2 oxidized [2Fe-2S]-[ferredoxin] + H2O. The catalysed reaction is fenuron + 2 reduced [2Fe-2S]-[ferredoxin] + O2 + 2 H(+) = 1-methyl-3-phenylurea + formaldehyde + 2 oxidized [2Fe-2S]-[ferredoxin] + H2O. The protein operates within xenobiotic degradation. With respect to regulation, activity is stimulated in vitro by coexpression of a [3Fe-4S]-type ferredoxin. Part of the multicomponent N,N-dimethyl phenylurea N-demethylase responsible for the initial N-demethylation step during the bacterial metabolism of N,N-dimethyl-substituted phenylurea herbicides. Catalyzes the mono-N-demethylation of N,N-dimethyl-substituted phenylurea herbicides to their mono-N-demethylated derivatives. Is active on isoproturon (IPU), chlorotoluron, metoxuron, monoron, diuron, fluometuron and fenuron, but cannot transform the N-methoxy-N-methyl-substituted herbicides. The polypeptide is N,N-dimethyl phenylurea N-demethylase subunit beta (Sphingobium sp. (strain YBL2)).